The sequence spans 223 residues: Phosphoribosylformylglycinamidine synthase subunit PurQ (223 aa).

A Glutamine amidotransferase type-1 domain is found at 3-223 (FAVLVFPGSN…MVNSWREQNV (221 aa)). The active-site Nucleophile is the C85. Residues H193 and E195 contribute to the active site.

Part of the FGAM synthase complex composed of 1 PurL, 1 PurQ and 2 PurS subunits.

It is found in the cytoplasm. It carries out the reaction N(2)-formyl-N(1)-(5-phospho-beta-D-ribosyl)glycinamide + L-glutamine + ATP + H2O = 2-formamido-N(1)-(5-O-phospho-beta-D-ribosyl)acetamidine + L-glutamate + ADP + phosphate + H(+). It catalyses the reaction L-glutamine + H2O = L-glutamate + NH4(+). It participates in purine metabolism; IMP biosynthesis via de novo pathway; 5-amino-1-(5-phospho-D-ribosyl)imidazole from N(2)-formyl-N(1)-(5-phospho-D-ribosyl)glycinamide: step 1/2. Its function is as follows. Part of the phosphoribosylformylglycinamidine synthase complex involved in the purines biosynthetic pathway. Catalyzes the ATP-dependent conversion of formylglycinamide ribonucleotide (FGAR) and glutamine to yield formylglycinamidine ribonucleotide (FGAM) and glutamate. The FGAM synthase complex is composed of three subunits. PurQ produces an ammonia molecule by converting glutamine to glutamate. PurL transfers the ammonia molecule to FGAR to form FGAM in an ATP-dependent manner. PurS interacts with PurQ and PurL and is thought to assist in the transfer of the ammonia molecule from PurQ to PurL. This is Phosphoribosylformylglycinamidine synthase subunit PurQ from Staphylococcus haemolyticus (strain JCSC1435).